A 292-amino-acid polypeptide reads, in one-letter code: Zinc finger protein SNAI3 (292 aa).

The tract at residues 1 to 20 (MPRSFLVKTHSSHRVPNYRR) is SNAG domain. 4 C2H2-type zinc fingers span residues 152-174 (FECF…RQLH), 183-205 (FTCK…IRTH), 209-231 (CTCK…VRTH), and 237-259 (YACS…LQTH). A C2H2-type 5; degenerate zinc finger spans residues 265–287 (YRCRRCTKTFSRMSLLARHEESG).

The protein belongs to the snail C2H2-type zinc-finger protein family.

Its subcellular location is the nucleus. In terms of biological role, seems to inhibit myoblast differentiation. Transcriptional repressor of E-box-dependent transactivation of downstream myogenic bHLHs genes. Binds preferentially to the canonical E-box sequences 5'-CAGGTG-3' and 5'-CACCTG-3'. This chain is Zinc finger protein SNAI3 (SNAI3), found in Homo sapiens (Human).